The following is a 232-amino-acid chain: tRNA-uridine aminocarboxypropyltransferase (232 aa).

Positions 31, 34, 41, and 43 each coordinate Zn(2+). A DXTW motif is present at residues aspartate 137–tryptophan 140.

This sequence belongs to the TDD superfamily. DTWD2 family. TapT subfamily. In terms of assembly, monomer in solution.

It catalyses the reaction a uridine in tRNA + S-adenosyl-L-methionine = a 3-[(3S)-3-amino-3-carboxypropyl]uridine in tRNA + S-methyl-5'-thioadenosine + H(+). It carries out the reaction uridine(47) in tRNA(Phe) + S-adenosyl-L-methionine = 3-[(3S)-3-amino-3-carboxypropyl]uridine(47) in tRNA(Phe) + S-methyl-5'-thioadenosine + H(+). With respect to regulation, the degree of the acp3U modification at U47 is dependent on the presence of the m7G modification at the preceding nucleotide G46. It also depends on medium conditions. Catalyzes the formation of 3-(3-amino-3-carboxypropyl)uridine (acp3U) at position 47 of tRNAs. Acp3U47 confers thermal stability on tRNA. In Escherichia coli (strain K12), this protein is tRNA-uridine aminocarboxypropyltransferase.